The following is a 319-amino-acid chain: ATP-dependent 6-phosphofructokinase (319 aa).

Residue Gly-11 participates in ATP binding. 21–25 (RAVVR) lines the ADP pocket. ATP contacts are provided by residues 72 to 73 (RC) and 102 to 105 (GDGS). Asp-103 provides a ligand contact to Mg(2+). 125-127 (TID) is a binding site for substrate. Asp-127 (proton acceptor) is an active-site residue. ADP is bound at residue Arg-154. Substrate contacts are provided by residues Arg-162 and 169–171 (MGR). Residues 185-187 (GAE), Arg-211, and 213-215 (KRH) contribute to the ADP site. Substrate contacts are provided by residues Glu-222, Arg-243, and 249 to 252 (HVQR).

The protein belongs to the phosphofructokinase type A (PFKA) family. ATP-dependent PFK group I subfamily. Prokaryotic clade 'B1' sub-subfamily. In terms of assembly, homotetramer. The cofactor is Mg(2+).

It localises to the cytoplasm. The catalysed reaction is beta-D-fructose 6-phosphate + ATP = beta-D-fructose 1,6-bisphosphate + ADP + H(+). It functions in the pathway carbohydrate degradation; glycolysis; D-glyceraldehyde 3-phosphate and glycerone phosphate from D-glucose: step 3/4. Its activity is regulated as follows. Allosterically activated by ADP and other diphosphonucleosides, and allosterically inhibited by phosphoenolpyruvate. Functionally, catalyzes the phosphorylation of D-fructose 6-phosphate to fructose 1,6-bisphosphate by ATP, the first committing step of glycolysis. The chain is ATP-dependent 6-phosphofructokinase from Clostridioides difficile (strain 630) (Peptoclostridium difficile).